We begin with the raw amino-acid sequence, 292 residues long: Probable porphobilinogen deaminase (292 aa).

Cys-233 is subject to S-(dipyrrolylmethanemethyl)cysteine.

This sequence belongs to the HMBS family. The cofactor is dipyrromethane.

The catalysed reaction is 4 porphobilinogen + H2O = hydroxymethylbilane + 4 NH4(+). Its pathway is porphyrin-containing compound metabolism; protoporphyrin-IX biosynthesis; coproporphyrinogen-III from 5-aminolevulinate: step 2/4. In terms of biological role, tetrapolymerization of the monopyrrole PBG into the hydroxymethylbilane pre-uroporphyrinogen in several discrete steps. This is Probable porphobilinogen deaminase (hemC) from Methanocaldococcus jannaschii (strain ATCC 43067 / DSM 2661 / JAL-1 / JCM 10045 / NBRC 100440) (Methanococcus jannaschii).